The following is a 118-amino-acid chain: NLIQFGNMIQCANKGSRPSLDYADYGCYCGWGGSGTPVDELDRCCQVHDNCYEQAGKKGCFPKLTLYSWKCTGNVPTCNSKPGCKSFVCACDAAAAKCFAKAPYKKENYNIDTKKRCK.

7 cysteine pairs are disulfide-bonded: C11-C71, C27-C117, C29-C45, C44-C98, C51-C91, C60-C84, and C78-C89. Positions 28, 30, and 32 each coordinate Ca(2+). Residue H48 is part of the active site. Position 49 (D49) interacts with Ca(2+). Residue D92 is part of the active site.

The protein belongs to the phospholipase A2 family. Group I subfamily. D49 sub-subfamily. It depends on Ca(2+) as a cofactor. In terms of tissue distribution, expressed by the venom gland.

It localises to the secreted. It catalyses the reaction a 1,2-diacyl-sn-glycero-3-phosphocholine + H2O = a 1-acyl-sn-glycero-3-phosphocholine + a fatty acid + H(+). Functionally, PLA2 catalyzes the calcium-dependent hydrolysis of the 2-acyl groups in 3-sn-phosphoglycerides. The chain is Basic phospholipase A2 PA-11 from Pseudechis australis (Mulga snake).